An 89-amino-acid polypeptide reads, in one-letter code: Small ribosomal subunit protein uS15 (89 aa).

This sequence belongs to the universal ribosomal protein uS15 family. As to quaternary structure, part of the 30S ribosomal subunit. Forms a bridge to the 50S subunit in the 70S ribosome, contacting the 23S rRNA.

One of the primary rRNA binding proteins, it binds directly to 16S rRNA where it helps nucleate assembly of the platform of the 30S subunit by binding and bridging several RNA helices of the 16S rRNA. Its function is as follows. Forms an intersubunit bridge (bridge B4) with the 23S rRNA of the 50S subunit in the ribosome. The sequence is that of Small ribosomal subunit protein uS15 from Gluconacetobacter diazotrophicus (strain ATCC 49037 / DSM 5601 / CCUG 37298 / CIP 103539 / LMG 7603 / PAl5).